The sequence spans 229 residues: Potassium/proton antiporter CemA (229 aa).

The next 4 membrane-spanning stretches (helical) occupy residues 7–27 (FIPL…SFTF), 107–127 (ILHF…SILG), 154–174 (ILLL…ELVI), and 189–209 (IISG…KYWI).

The protein belongs to the CemA family.

The protein resides in the plastid. The protein localises to the chloroplast inner membrane. It carries out the reaction K(+)(in) + H(+)(out) = K(+)(out) + H(+)(in). Contributes to K(+)/H(+) antiport activity by supporting proton efflux to control proton extrusion and homeostasis in chloroplasts in a light-dependent manner to modulate photosynthesis. Prevents excessive induction of non-photochemical quenching (NPQ) under continuous-light conditions. Indirectly promotes efficient inorganic carbon uptake into chloroplasts. The protein is Potassium/proton antiporter CemA of Glycine max (Soybean).